The primary structure comprises 233 residues: Type IV secretion system protein PtlE homolog (233 aa).

The helical transmembrane segment at 42-62 threads the bilayer; sequence VAWAALAVTALSLIAIATMLP.

Belongs to the virB8 family.

Its subcellular location is the cell inner membrane. In Bordetella parapertussis (strain 12822 / ATCC BAA-587 / NCTC 13253), this protein is Type IV secretion system protein PtlE homolog (ptlE).